The following is a 144-amino-acid chain: Large-conductance mechanosensitive channel (144 aa).

The next 2 membrane-spanning stretches (helical) occupy residues 21–41 (VGII…ANVI) and 76–96 (GIFL…FCII). A disordered region spans residues 105 to 144 (QRGGKTRRAVQTECGRDAAYRDPRSLETTKQRHGAGYNDD). Positions 118–134 (CGRDAAYRDPRSLETTK) are enriched in basic and acidic residues.

Belongs to the MscL family. As to quaternary structure, homopentamer.

It is found in the cell inner membrane. Functionally, channel that opens in response to stretch forces in the membrane lipid bilayer. May participate in the regulation of osmotic pressure changes within the cell. The protein is Large-conductance mechanosensitive channel of Sodalis glossinidius (strain morsitans).